A 105-amino-acid polypeptide reads, in one-letter code: Small ribosomal subunit protein uS10 (105 aa).

Belongs to the universal ribosomal protein uS10 family. As to quaternary structure, part of the 30S ribosomal subunit.

Its function is as follows. Involved in the binding of tRNA to the ribosomes. The chain is Small ribosomal subunit protein uS10 from Lawsonia intracellularis (strain PHE/MN1-00).